We begin with the raw amino-acid sequence, 241 residues long: Ribose-5-phosphate isomerase A (241 aa).

Substrate contacts are provided by residues 29-32 (TGTT), 84-87 (DGAD), and 97-100 (KGGG). The active-site Proton acceptor is the glutamate 106. Lysine 124 provides a ligand contact to substrate.

This sequence belongs to the ribose 5-phosphate isomerase family. In terms of assembly, homodimer.

The enzyme catalyses aldehydo-D-ribose 5-phosphate = D-ribulose 5-phosphate. The protein operates within carbohydrate degradation; pentose phosphate pathway; D-ribose 5-phosphate from D-ribulose 5-phosphate (non-oxidative stage): step 1/1. Its function is as follows. Catalyzes the reversible conversion of ribose-5-phosphate to ribulose 5-phosphate. In Thermoplasma acidophilum (strain ATCC 25905 / DSM 1728 / JCM 9062 / NBRC 15155 / AMRC-C165), this protein is Ribose-5-phosphate isomerase A.